A 414-amino-acid chain; its full sequence is Serine hydroxymethyltransferase (414 aa).

Residues Leu116 and 120–122 (GHL) contribute to the (6S)-5,6,7,8-tetrahydrofolate site. Residue Lys224 is modified to N6-(pyridoxal phosphate)lysine. Residues Glu240 and 348–350 (SPF) contribute to the (6S)-5,6,7,8-tetrahydrofolate site.

This sequence belongs to the SHMT family. Homodimer. The cofactor is pyridoxal 5'-phosphate.

It is found in the cytoplasm. It catalyses the reaction (6R)-5,10-methylene-5,6,7,8-tetrahydrofolate + glycine + H2O = (6S)-5,6,7,8-tetrahydrofolate + L-serine. It functions in the pathway one-carbon metabolism; tetrahydrofolate interconversion. The protein operates within amino-acid biosynthesis; glycine biosynthesis; glycine from L-serine: step 1/1. Functionally, catalyzes the reversible interconversion of serine and glycine with tetrahydrofolate (THF) serving as the one-carbon carrier. This reaction serves as the major source of one-carbon groups required for the biosynthesis of purines, thymidylate, methionine, and other important biomolecules. Also exhibits THF-independent aldolase activity toward beta-hydroxyamino acids, producing glycine and aldehydes, via a retro-aldol mechanism. This Campylobacter fetus subsp. fetus (strain 82-40) protein is Serine hydroxymethyltransferase.